The sequence spans 416 residues: Serine hydroxymethyltransferase (416 aa).

(6S)-5,6,7,8-tetrahydrofolate contacts are provided by residues L118 and 122–124 (GHL). At K226 the chain carries N6-(pyridoxal phosphate)lysine. Residues E242 and 350 to 352 (SPF) each bind (6S)-5,6,7,8-tetrahydrofolate.

Belongs to the SHMT family. In terms of assembly, homodimer. Pyridoxal 5'-phosphate is required as a cofactor.

The protein resides in the cytoplasm. It carries out the reaction (6R)-5,10-methylene-5,6,7,8-tetrahydrofolate + glycine + H2O = (6S)-5,6,7,8-tetrahydrofolate + L-serine. The protein operates within one-carbon metabolism; tetrahydrofolate interconversion. It participates in amino-acid biosynthesis; glycine biosynthesis; glycine from L-serine: step 1/1. Catalyzes the reversible interconversion of serine and glycine with tetrahydrofolate (THF) serving as the one-carbon carrier. This reaction serves as the major source of one-carbon groups required for the biosynthesis of purines, thymidylate, methionine, and other important biomolecules. Also exhibits THF-independent aldolase activity toward beta-hydroxyamino acids, producing glycine and aldehydes, via a retro-aldol mechanism. The chain is Serine hydroxymethyltransferase from Helicobacter hepaticus (strain ATCC 51449 / 3B1).